The chain runs to 185 residues: Large ribosomal subunit protein uL5 (185 aa).

It belongs to the universal ribosomal protein uL5 family. As to quaternary structure, part of the 50S ribosomal subunit; part of the 5S rRNA/L5/L18/L25 subcomplex. Contacts the 5S rRNA and the P site tRNA. Forms a bridge to the 30S subunit in the 70S ribosome.

In terms of biological role, this is one of the proteins that bind and probably mediate the attachment of the 5S RNA into the large ribosomal subunit, where it forms part of the central protuberance. In the 70S ribosome it contacts protein S13 of the 30S subunit (bridge B1b), connecting the 2 subunits; this bridge is implicated in subunit movement. Contacts the P site tRNA; the 5S rRNA and some of its associated proteins might help stabilize positioning of ribosome-bound tRNAs. In Rhodopseudomonas palustris (strain BisB18), this protein is Large ribosomal subunit protein uL5.